The chain runs to 238 residues: Ribonuclease PH (238 aa).

Residues Arg-86 and 124-126 each bind phosphate; that span reads GTR.

The protein belongs to the RNase PH family. As to quaternary structure, homohexameric ring arranged as a trimer of dimers.

It catalyses the reaction tRNA(n+1) + phosphate = tRNA(n) + a ribonucleoside 5'-diphosphate. Functionally, phosphorolytic 3'-5' exoribonuclease that plays an important role in tRNA 3'-end maturation. Removes nucleotide residues following the 3'-CCA terminus of tRNAs; can also add nucleotides to the ends of RNA molecules by using nucleoside diphosphates as substrates, but this may not be physiologically important. Probably plays a role in initiation of 16S rRNA degradation (leading to ribosome degradation) during starvation. This Marinobacter nauticus (strain ATCC 700491 / DSM 11845 / VT8) (Marinobacter aquaeolei) protein is Ribonuclease PH.